Reading from the N-terminus, the 192-residue chain is Fe/S biogenesis protein NfuA (192 aa).

Residues Cys149 and Cys152 each contribute to the [4Fe-4S] cluster site.

Belongs to the NfuA family. As to quaternary structure, homodimer. The cofactor is [4Fe-4S] cluster.

Its function is as follows. Involved in iron-sulfur cluster biogenesis. Binds a 4Fe-4S cluster, can transfer this cluster to apoproteins, and thereby intervenes in the maturation of Fe/S proteins. Could also act as a scaffold/chaperone for damaged Fe/S proteins. The chain is Fe/S biogenesis protein NfuA from Tolumonas auensis (strain DSM 9187 / NBRC 110442 / TA 4).